A 455-amino-acid chain; its full sequence is Beta-glucosidase A (455 aa).

The active-site Proton donor is Glu-165. The active-site Nucleophile is the Glu-363.

This sequence belongs to the glycosyl hydrolase 1 family.

It carries out the reaction Hydrolysis of terminal, non-reducing beta-D-glucosyl residues with release of beta-D-glucose.. This is Beta-glucosidase A (bglA) from Caldicellulosiruptor saccharolyticus (Caldocellum saccharolyticum).